The following is a 107-amino-acid chain: Phosphoribosyl-ATP pyrophosphatase (107 aa).

It belongs to the PRA-PH family.

It localises to the cytoplasm. It catalyses the reaction 1-(5-phospho-beta-D-ribosyl)-ATP + H2O = 1-(5-phospho-beta-D-ribosyl)-5'-AMP + diphosphate + H(+). The protein operates within amino-acid biosynthesis; L-histidine biosynthesis; L-histidine from 5-phospho-alpha-D-ribose 1-diphosphate: step 2/9. The protein is Phosphoribosyl-ATP pyrophosphatase (hisE) of Rhizobium meliloti (strain 1021) (Ensifer meliloti).